The primary structure comprises 446 residues: Phosphoglucosamine mutase (446 aa).

Ser100 functions as the Phosphoserine intermediate in the catalytic mechanism. Mg(2+) is bound by residues Ser100, Asp239, Asp241, and Asp243. At Ser100 the chain carries Phosphoserine.

This sequence belongs to the phosphohexose mutase family. The cofactor is Mg(2+). Post-translationally, activated by phosphorylation.

It carries out the reaction alpha-D-glucosamine 1-phosphate = D-glucosamine 6-phosphate. Its function is as follows. Catalyzes the conversion of glucosamine-6-phosphate to glucosamine-1-phosphate. The protein is Phosphoglucosamine mutase of Oceanobacillus iheyensis (strain DSM 14371 / CIP 107618 / JCM 11309 / KCTC 3954 / HTE831).